A 492-amino-acid polypeptide reads, in one-letter code: KAT8 regulatory NSL complex subunit 2 (492 aa).

Lysine 78 participates in a covalent cross-link: Glycyl lysine isopeptide (Lys-Gly) (interchain with G-Cter in SUMO2). Residues 126–182 (ELGSQTPESSRSEASRILDEDSWSDGEQEPITVDQTWRGDPDSEADSIDSDQEDPLK) form a disordered region. Phosphothreonine is present on threonine 131. Positions 135–144 (SRSEASRILD) are enriched in basic and acidic residues. A phosphoserine mark is found at serine 147, serine 149, serine 168, serine 172, and serine 175. Residues 167–178 (DSEADSIDSDQE) show a composition bias toward acidic residues. Residues 308–364 (DVRCSNQSLPMTRHCLTHICQDTNQVLFKCCQGSEEVPCNKPVPVSLSEDPCCPLHF) form a required for interaction with other NSL complex members region. A disordered region spans residues 455–492 (AGDGCRSQGSRNSEKASAPLSQSGLATANGKPEPTSIS).

Component of the NSL complex at least composed of KAT8/MOF, KANSL1, KANSL2, KANSL3, MCRS1, PHF20, OGT1/OGT, WDR5 and HCFC1.

The protein resides in the nucleus. It is found in the mitochondrion. Its function is as follows. Non-catalytic component of the NSL histone acetyltransferase complex, a multiprotein complex that mediates histone H4 acetylation at 'Lys-5'- and 'Lys-8' (H4K5ac and H4K8ac) at transcription start sites and promotes transcription initiation. Required for NSL complex stability and for transcription of intraciliary transport genes in both ciliated and non-ciliated cells by regulating histone H4 acetylation at 'Lys-5'- and 'Lys-12' (H4K5ac and H4K12ac). This is necessary for cilium assembly in ciliated cells and for organization of the microtubule cytoskeleton in non-ciliated cells. Required within the NSL complex to maintain nuclear architecture stability by promoting KAT8-mediated acetylation of lamin LMNA. The protein is KAT8 regulatory NSL complex subunit 2 (KANSL2) of Homo sapiens (Human).